The following is a 122-amino-acid chain: Large ribosomal subunit protein uL14c (122 aa).

This sequence belongs to the universal ribosomal protein uL14 family. Part of the 50S ribosomal subunit.

Its subcellular location is the plastid. It is found in the chloroplast. Functionally, binds to 23S rRNA. The sequence is that of Large ribosomal subunit protein uL14c from Dioscorea elephantipes (Elephant's foot yam).